A 158-amino-acid chain; its full sequence is Protein OPG060 (158 aa).

The protein belongs to the orthopoxvirus OPG058 family.

The polypeptide is Protein OPG060 (OPG060) (Homo sapiens (Human)).